A 342-amino-acid chain; its full sequence is UDP-N-acetylenolpyruvoylglucosamine reductase (342 aa).

The region spanning 13–183 is the FAD-binding PCMH-type domain; that stretch reads IDHNAQHIVC…VAVGLRLPKE (171 aa). Residue Arg159 is part of the active site. Tyr190 serves as a coordination point for substrate. The active-site Proton donor is the Ser229. Glu325 is a catalytic residue.

The protein belongs to the MurB family. The cofactor is FAD.

It is found in the cytoplasm. It catalyses the reaction UDP-N-acetyl-alpha-D-muramate + NADP(+) = UDP-N-acetyl-3-O-(1-carboxyvinyl)-alpha-D-glucosamine + NADPH + H(+). Its pathway is cell wall biogenesis; peptidoglycan biosynthesis. Functionally, cell wall formation. This is UDP-N-acetylenolpyruvoylglucosamine reductase from Escherichia coli O6:H1 (strain CFT073 / ATCC 700928 / UPEC).